The primary structure comprises 234 residues: Large ribosomal subunit protein uL1 (234 aa).

The protein belongs to the universal ribosomal protein uL1 family. In terms of assembly, part of the 50S ribosomal subunit.

Binds directly to 23S rRNA. The L1 stalk is quite mobile in the ribosome, and is involved in E site tRNA release. In terms of biological role, protein L1 is also a translational repressor protein, it controls the translation of the L11 operon by binding to its mRNA. This Sodalis glossinidius (strain morsitans) protein is Large ribosomal subunit protein uL1.